Consider the following 671-residue polypeptide: Zinc finger protein 750 (671 aa).

The CCHC-type zinc-finger motif lies at 25–51 (YKCFQCPFTCNEKSHLFNHMKYGLCKN). Cysteine 27, cysteine 30, histidine 43, and cysteine 49 together coordinate Zn(2+). Disordered stretches follow at residues 66-87 (PKVNSTDQKQPSNEPFAKSPVP), 366-433 (ETSP…KDFT), and 592-671 (SSPG…PRVS). Composition is skewed to polar residues over residues 67–78 (KVNSTDQKQPSN) and 402–412 (SPTNFTQNSQG).

The protein localises to the nucleus. In terms of biological role, transcription factor involved in epidermis differentiation. The protein is Zinc finger protein 750 (znf750) of Xenopus tropicalis (Western clawed frog).